The following is a 589-amino-acid chain: Kelch-like protein 25 (589 aa).

Residues 46–114 (TDVTLWAGNR…AYSSKIIINE (69 aa)) form the BTB domain. Residues 149–250 (CLGMMILSDA…LPSELLKEAV (102 aa)) form the BACK domain. 6 Kelch repeats span residues 296–340 (TLLI…AIGC), 341–388 (KVYV…ELEN), 389–444 (CLYV…SAKL), 446–492 (LFAF…VLGS), 493–538 (QIFI…ASGN), and 539–585 (KVYV…STWK).

As to quaternary structure, component of the BCR(KLHL25) E3 ubiquitin ligase complex, at least composed of cul3, klhl25 and rbx1.

It functions in the pathway protein modification; protein ubiquitination. Substrate-specific adapter of a BCR (BTB-CUL3-RBX1) E3 ubiquitin ligase complex involved in various processes, such as translation homeostasis and lipid synthesis. The BCR(KLHL25) ubiquitin ligase complex acts by mediating ubiquitination of hypophosphorylated eif4ebp1 (4E-BP1): ubiquitination and subsequent degradation of hypophosphorylated EIF4EBP1 (4E-BP1) probably serves as a homeostatic mechanism to maintain translation and prevent eIF4E inhibition when eIF4E levels are low. The BCR(KLHL25) complex also acts as a regulator of lipid synthesis by mediating ubiquitination and degradation of ACLY, thereby inhibiting lipid synthesis. The polypeptide is Kelch-like protein 25 (Xenopus tropicalis (Western clawed frog)).